A 196-amino-acid polypeptide reads, in one-letter code: Transmembrane protein 52 (196 aa).

The first 28 residues, methionine 1–alanine 28, serve as a signal peptide directing secretion. The helical transmembrane segment at leucine 47–alanine 67 threads the bilayer. Residues glutamate 162–proline 196 are disordered.

The protein localises to the membrane. The polypeptide is Transmembrane protein 52 (Tmem52) (Mus musculus (Mouse)).